Here is a 438-residue protein sequence, read N- to C-terminus: Serine carboxypeptidase-like 5 (438 aa).

The first 28 residues, Met1–Ser28, serve as a signal peptide directing secretion. 3 cysteine pairs are disulfide-bonded: Cys87–Cys328, Cys251–Cys263, and Cys287–Cys294. Residue Asn108 is glycosylated (N-linked (GlcNAc...) asparagine). The active site involves Ser183. N-linked (GlcNAc...) asparagine glycosylation is present at Asn347. Residue Asp363 is part of the active site. The N-linked (GlcNAc...) asparagine glycan is linked to Asn379. Residue His416 is part of the active site.

This sequence belongs to the peptidase S10 family. Expressed in seedlings, roots, and siliques.

It localises to the secreted. Probable carboxypeptidase. The protein is Serine carboxypeptidase-like 5 (SCPL5) of Arabidopsis thaliana (Mouse-ear cress).